We begin with the raw amino-acid sequence, 489 residues long: Ataxin-10 homolog (489 aa).

Belongs to the ataxin-10 family.

Its subcellular location is the cytoplasm. In terms of biological role, may play a role in the regulation of cytokinesis. The chain is Ataxin-10 homolog (CTR86) from Debaryomyces hansenii (strain ATCC 36239 / CBS 767 / BCRC 21394 / JCM 1990 / NBRC 0083 / IGC 2968) (Yeast).